The following is a 335-amino-acid chain: ATP-dependent 6-phosphofructokinase (335 aa).

Glycine 11 lines the ATP pocket. 21–25 (RAVVR) contributes to the ADP binding site. Residues 72–73 (RY) and 102–105 (GDGS) contribute to the ATP site. Aspartate 103 provides a ligand contact to Mg(2+). 125–127 (TID) is a binding site for substrate. Aspartate 127 functions as the Proton acceptor in the catalytic mechanism. Arginine 154 serves as a coordination point for ADP. Substrate-binding positions include arginine 162 and 169 to 171 (MGR). ADP-binding positions include 185–187 (GAD) and 213–215 (KKH). Residues glutamate 222, arginine 244, and 250 to 253 (HIQR) contribute to the substrate site.

The protein belongs to the phosphofructokinase type A (PFKA) family. ATP-dependent PFK group I subfamily. Prokaryotic clade 'B1' sub-subfamily. As to quaternary structure, homotetramer. Mg(2+) is required as a cofactor.

The protein localises to the cytoplasm. It carries out the reaction beta-D-fructose 6-phosphate + ATP = beta-D-fructose 1,6-bisphosphate + ADP + H(+). The protein operates within carbohydrate degradation; glycolysis; D-glyceraldehyde 3-phosphate and glycerone phosphate from D-glucose: step 3/4. With respect to regulation, allosterically activated by ADP and other diphosphonucleosides, and allosterically inhibited by phosphoenolpyruvate. Catalyzes the phosphorylation of D-fructose 6-phosphate to fructose 1,6-bisphosphate by ATP, the first committing step of glycolysis. The sequence is that of ATP-dependent 6-phosphofructokinase from Streptococcus pneumoniae (strain ATCC BAA-255 / R6).